A 99-amino-acid chain; its full sequence is Aspartyl/glutamyl-tRNA(Asn/Gln) amidotransferase subunit C (99 aa).

The protein belongs to the GatC family. In terms of assembly, heterotrimer of A, B and C subunits.

It carries out the reaction L-glutamyl-tRNA(Gln) + L-glutamine + ATP + H2O = L-glutaminyl-tRNA(Gln) + L-glutamate + ADP + phosphate + H(+). It catalyses the reaction L-aspartyl-tRNA(Asn) + L-glutamine + ATP + H2O = L-asparaginyl-tRNA(Asn) + L-glutamate + ADP + phosphate + 2 H(+). In terms of biological role, allows the formation of correctly charged Asn-tRNA(Asn) or Gln-tRNA(Gln) through the transamidation of misacylated Asp-tRNA(Asn) or Glu-tRNA(Gln) in organisms which lack either or both of asparaginyl-tRNA or glutaminyl-tRNA synthetases. The reaction takes place in the presence of glutamine and ATP through an activated phospho-Asp-tRNA(Asn) or phospho-Glu-tRNA(Gln). This Macrococcus caseolyticus (strain JCSC5402) (Macrococcoides caseolyticum) protein is Aspartyl/glutamyl-tRNA(Asn/Gln) amidotransferase subunit C.